The primary structure comprises 139 residues: Large-conductance mechanosensitive channel (139 aa).

A run of 2 helical transmembrane segments spans residues 9-29 (AFAV…GAAF) and 79-99 (IQSV…VKAI).

This sequence belongs to the MscL family. In terms of assembly, homopentamer.

The protein resides in the cell inner membrane. Its function is as follows. Channel that opens in response to stretch forces in the membrane lipid bilayer. May participate in the regulation of osmotic pressure changes within the cell. The sequence is that of Large-conductance mechanosensitive channel from Pseudomonas fluorescens (strain SBW25).